The sequence spans 373 residues: Histidinol-phosphate aminotransferase (373 aa).

Polar residues predominate over residues 1–10 (MTGVPGSSIT). The interval 1 to 45 (MTGVPGSSITLDDLPLRDDLRGKSPYGAPQLSVPVRLNTNENPHP) is disordered. N6-(pyridoxal phosphate)lysine is present on Lys237.

The protein belongs to the class-II pyridoxal-phosphate-dependent aminotransferase family. Histidinol-phosphate aminotransferase subfamily. In terms of assembly, homodimer. It depends on pyridoxal 5'-phosphate as a cofactor.

The enzyme catalyses L-histidinol phosphate + 2-oxoglutarate = 3-(imidazol-4-yl)-2-oxopropyl phosphate + L-glutamate. It functions in the pathway amino-acid biosynthesis; L-histidine biosynthesis; L-histidine from 5-phospho-alpha-D-ribose 1-diphosphate: step 7/9. In Mycolicibacterium vanbaalenii (strain DSM 7251 / JCM 13017 / BCRC 16820 / KCTC 9966 / NRRL B-24157 / PYR-1) (Mycobacterium vanbaalenii), this protein is Histidinol-phosphate aminotransferase.